The following is a 155-amino-acid chain: 6,7-dimethyl-8-ribityllumazine synthase (155 aa).

5-amino-6-(D-ribitylamino)uracil-binding positions include Phe24, 58–60 (AFE), and 82–84 (AII). 87–88 (ST) lines the (2S)-2-hydroxy-3-oxobutyl phosphate pocket. Catalysis depends on His90, which acts as the Proton donor. Phe115 is a 5-amino-6-(D-ribitylamino)uracil binding site. Arg129 is a binding site for (2S)-2-hydroxy-3-oxobutyl phosphate.

It belongs to the DMRL synthase family.

It carries out the reaction (2S)-2-hydroxy-3-oxobutyl phosphate + 5-amino-6-(D-ribitylamino)uracil = 6,7-dimethyl-8-(1-D-ribityl)lumazine + phosphate + 2 H2O + H(+). Its pathway is cofactor biosynthesis; riboflavin biosynthesis; riboflavin from 2-hydroxy-3-oxobutyl phosphate and 5-amino-6-(D-ribitylamino)uracil: step 1/2. Functionally, catalyzes the formation of 6,7-dimethyl-8-ribityllumazine by condensation of 5-amino-6-(D-ribitylamino)uracil with 3,4-dihydroxy-2-butanone 4-phosphate. This is the penultimate step in the biosynthesis of riboflavin. The sequence is that of 6,7-dimethyl-8-ribityllumazine synthase from Chlorobium luteolum (strain DSM 273 / BCRC 81028 / 2530) (Pelodictyon luteolum).